We begin with the raw amino-acid sequence, 266 residues long: MLMSKLADVFKNHKVFIPFIVADDPDFETTVKNVVALAKGGADIVELGIPFSDPVADGPVIQAADLRAFAANVRTKTVFDIVEAARKETAVPIVFLTYLNIVFKYGYDAFLKRCADLNVAGLVIPDLPYESRDEIVPIAEKYGIDIIPLITPTSGHRIEKIAKSASGFIYVVSSMGITGERDEFFAGLKALVAEIKQYTNVPTAIGFGIHTPEQAQTMAGIADGVIIGSAIVDLVAKEKQQAPAAIEKFTKQIRVAVDAKKQISVK.

Residues Glu46 and Asp57 each act as proton acceptor in the active site.

It belongs to the TrpA family. As to quaternary structure, tetramer of two alpha and two beta chains.

It carries out the reaction (1S,2R)-1-C-(indol-3-yl)glycerol 3-phosphate + L-serine = D-glyceraldehyde 3-phosphate + L-tryptophan + H2O. It participates in amino-acid biosynthesis; L-tryptophan biosynthesis; L-tryptophan from chorismate: step 5/5. Functionally, the alpha subunit is responsible for the aldol cleavage of indoleglycerol phosphate to indole and glyceraldehyde 3-phosphate. The polypeptide is Tryptophan synthase alpha chain (Lacticaseibacillus casei (Lactobacillus casei)).